The following is a 290-amino-acid chain: HTH-type transcriptional activator RhaR (290 aa).

Residues 179–277 form the HTH araC/xylS-type domain; that stretch reads DLIMSALQQS…GMTPRDYRQR (99 aa). 2 DNA-binding regions (H-T-H motif) span residues 196–217 and 244–267; these read ANFCHKNQLVERSLKQLFRQQT and ISDIAARCGFEDSNYFSAVFTREA.

Binds DNA as a dimer.

It is found in the cytoplasm. Activates expression of the rhaSR operon in response to L-rhamnose. This chain is HTH-type transcriptional activator RhaR, found in Yersinia pseudotuberculosis serotype O:3 (strain YPIII).